A 615-amino-acid chain; its full sequence is Ectoine/glycine betaine/proline transporter EctP (615 aa).

Helical transmembrane passes span 24–44, 62–82, 102–122, 156–176, 207–227, 240–260, 275–295, 329–349, 360–380, 417–437, 463–483, and 489–509; these read FIFSISVGFIVVFVIATIALG, LGWMYIGGVSLVFIFLMGIFA, IVWFCMLFAGGVGAVLMFWGV, FGIHMWVIMALPGLSLGYFIY, LAIVGTTFGIAVSVGLGVLQI, VSWVQLLIILIITAVACISVA, IAMAVALMFFILFTGPTLTLL, WTVFYWAWTICWSPYVGMFVA, FIGGVLALPAIFGVVWFSIFG, LTGIVSAFALVIIVIFFITSI, WACTIGAVAGSLLIISPSSGI, and VVIIVAFPFFLVQFVMMFSLL. Disordered stretches follow at residues 524-562 and 589-615; these read TRQWEKTDTPEKLEEHSSQPAPGYDDEGNPLPMPALEHD and PEEAQEMGSRFKIVEQTRPQSRDEYDI. Basic and acidic residues-rich tracts occupy residues 526-540 and 600-615; these read QWEKTDTPEKLEEHS and KIVEQTRPQSRDEYDI.

This sequence belongs to the BCCT transporter (TC 2.A.15) family.

The protein resides in the cell membrane. Functionally, involved in the uptake of osmoprotectants. Can transport ectoine, proline and glycine betaine. Na(+) is probably the coupling ion. The protein is Ectoine/glycine betaine/proline transporter EctP of Corynebacterium glutamicum (strain ATCC 13032 / DSM 20300 / JCM 1318 / BCRC 11384 / CCUG 27702 / LMG 3730 / NBRC 12168 / NCIMB 10025 / NRRL B-2784 / 534).